The following is a 377-amino-acid chain: Probable G-protein coupled receptor 27 (377 aa).

Over 1-24 (MANASEPGGGGGGAEAAALGLRLA) the chain is Extracellular. N-linked (GlcNAc...) asparagine glycosylation is present at Asn-3. A helical transmembrane segment spans residues 25-45 (TLSLLLCVSLAGNVLFALLIV). Residues 46–56 (RERSLHRAPYY) lie on the Cytoplasmic side of the membrane. Residues 57-77 (LLLDLCLADGLRALACLPAVM) traverse the membrane as a helical segment. Residues 78–98 (LAARRAAAAAGTPPGALGCKL) are Extracellular-facing. A disulfide bridge connects residues Cys-96 and Cys-173. A helical transmembrane segment spans residues 99-119 (LAFLAALFCFHAAFLLLGVGV). Residues 120-140 (TRYLAIAHHRFYAERLAGWPC) are Cytoplasmic-facing. The chain crosses the membrane as a helical span at residues 141 to 161 (AAMLVCAAWALALAAAFPPVL). Over 162 to 183 (DGGGADDEDAPCALEQRPDGAP) the chain is Extracellular. Residues 184 to 204 (GALGFLLLLAAVVGATHLVYL) form a helical membrane-spanning segment. At 205–287 (RLLFFIHDRR…FKTEKRLCKM (83 aa)) the chain is on the cytoplasmic side. A helical transmembrane segment spans residues 288 to 308 (FYAITLLFLLLWGPYVVASYL). Residues 309–322 (RVLVRPGAVPQAYL) are Extracellular-facing. A helical transmembrane segment spans residues 323 to 343 (TASVWLTFAQAGINPVVCFLF). Residues 344–377 (NRELRDCFRAQFPCCQSPQATQATLPCDLKGIGL) lie on the Cytoplasmic side of the membrane.

Belongs to the G-protein coupled receptor 1 family. As to expression, expressed as a 3.0 kb transcript, in whole brain, hippocampus, striatum, frontal cortex, thalamus, pons and hypothalamus. A lower molecular weight transcript was detected in all regions examined, except the hypothalamus.

The protein localises to the cell membrane. Orphan receptor. Possible candidate for amine-like G-protein coupled receptor. This Rattus norvegicus (Rat) protein is Probable G-protein coupled receptor 27 (Gpr27).